Consider the following 102-residue polypeptide: Large ribosomal subunit protein uL24 (102 aa).

A disordered region spans residues 44–65 (HAKPSQDNPQGGILNQEAPIHS).

The protein belongs to the universal ribosomal protein uL24 family. In terms of assembly, part of the 50S ribosomal subunit.

Functionally, one of two assembly initiator proteins, it binds directly to the 5'-end of the 23S rRNA, where it nucleates assembly of the 50S subunit. In terms of biological role, one of the proteins that surrounds the polypeptide exit tunnel on the outside of the subunit. The sequence is that of Large ribosomal subunit protein uL24 from Shouchella clausii (strain KSM-K16) (Alkalihalobacillus clausii).